Consider the following 189-residue polypeptide: Shikimate kinase (189 aa).

Residue 11–16 coordinates ATP; it reads GTGKSA. Ser15 lines the Mg(2+) pocket. Substrate-binding residues include Asp33, Arg57, and Gly79. Arg117 contributes to the ATP binding site. Residue Arg135 coordinates substrate.

Belongs to the shikimate kinase family. Monomer. Mg(2+) serves as cofactor.

The protein localises to the cytoplasm. The enzyme catalyses shikimate + ATP = 3-phosphoshikimate + ADP + H(+). It participates in metabolic intermediate biosynthesis; chorismate biosynthesis; chorismate from D-erythrose 4-phosphate and phosphoenolpyruvate: step 5/7. Functionally, catalyzes the specific phosphorylation of the 3-hydroxyl group of shikimic acid using ATP as a cosubstrate. The polypeptide is Shikimate kinase (Desulforudis audaxviator (strain MP104C)).